The primary structure comprises 545 residues: CTP synthase (545 aa).

An amidoligase domain region spans residues 1 to 266 (MTTRYIFVTG…DDLVVKRFGL (266 aa)). S14 is a CTP binding site. S14 is a UTP binding site. ATP is bound by residues 15–20 (SLGKGI) and D72. Residues D72 and E140 each contribute to the Mg(2+) site. Residues 147-149 (DIE), 187-192 (KTKPTQ), and K223 each bind CTP. Residues 187-192 (KTKPTQ) and K223 each bind UTP. An ATP-binding site is contributed by 239–241 (KDV). Positions 291–542 (VIGMVGKYIE…IAAASAHQKR (252 aa)) constitute a Glutamine amidotransferase type-1 domain. G352 lines the L-glutamine pocket. Catalysis depends on C379, which acts as the Nucleophile; for glutamine hydrolysis. Residues 380 to 383 (LGMQ), E403, and R470 each bind L-glutamine. Catalysis depends on residues H515 and E517.

The protein belongs to the CTP synthase family. As to quaternary structure, homotetramer.

The enzyme catalyses UTP + L-glutamine + ATP + H2O = CTP + L-glutamate + ADP + phosphate + 2 H(+). The catalysed reaction is L-glutamine + H2O = L-glutamate + NH4(+). It catalyses the reaction UTP + NH4(+) + ATP = CTP + ADP + phosphate + 2 H(+). It functions in the pathway pyrimidine metabolism; CTP biosynthesis via de novo pathway; CTP from UDP: step 2/2. With respect to regulation, allosterically activated by GTP, when glutamine is the substrate; GTP has no effect on the reaction when ammonia is the substrate. The allosteric effector GTP functions by stabilizing the protein conformation that binds the tetrahedral intermediate(s) formed during glutamine hydrolysis. Inhibited by the product CTP, via allosteric rather than competitive inhibition. Functionally, catalyzes the ATP-dependent amination of UTP to CTP with either L-glutamine or ammonia as the source of nitrogen. Regulates intracellular CTP levels through interactions with the four ribonucleotide triphosphates. This Shewanella baltica (strain OS223) protein is CTP synthase.